Consider the following 199-residue polypeptide: 5'-deoxynucleotidase YfbR (199 aa).

Residues 18-19 (RW) and His33 contribute to the substrate site. The 113-residue stretch at 30 to 142 (VSEHSLQVAM…VKQADALCAY (113 aa)) folds into the HD domain. His33, His68, and Asp69 together coordinate a divalent metal cation. Substrate is bound by residues Asp69, 77–80 (DLPT), and Asp137. Position 137 (Asp137) interacts with a divalent metal cation.

The protein belongs to the 5DNU family. In terms of assembly, homodimer. A divalent metal cation serves as cofactor.

It localises to the cytoplasm. It carries out the reaction a 2'-deoxyribonucleoside 5'-phosphate + H2O = a 2'-deoxyribonucleoside + phosphate. Catalyzes the strictly specific dephosphorylation of 2'-deoxyribonucleoside 5'-monophosphates. The chain is 5'-deoxynucleotidase YfbR from Escherichia coli O45:K1 (strain S88 / ExPEC).